The sequence spans 285 residues: Single myb histone 3 (285 aa).

Positions 1–35 (MGAPKQKWTSEEEDALRRGVRKHGAGKWRTIQKDP) are disordered. Residues 1–60 (MGAPKQKWTSEEEDALRRGVRKHGAGKWRTIQKDPQFSPILSSRSNIDLKDKWRNLSFSA) form the HTH myb-type domain. Residues 28–56 (WRTIQKDPQFSPILSSRSNIDLKDKWRNL) constitute a DNA-binding region (H-T-H motif). The region spanning 113–181 (TPPKYGAMIM…KVDNFYRLPD (69 aa)) is the H15 domain. Residues 226–255 (VKVTDAEAKAHDAHDQMMEAERMLKMAEDT) are a coiled coil.

It belongs to the histone H1/H5 family. SMH subfamily. In terms of assembly, forms a homodimer and heterodimers.

Its subcellular location is the nucleus. It localises to the chromosome. The protein localises to the nucleolus. The protein resides in the telomere. Binds preferentially double-stranded telomeric repeats, but may also bind to the single telomeric strand. This is Single myb histone 3 (SMH3) from Zea mays (Maize).